Consider the following 332-residue polypeptide: Adenosine receptor A2b (332 aa).

Residues 1 to 8 (MQLETQDA) are Extracellular-facing. Residues 9 to 33 (LYVALELVIAALAVAGNVLVCAAVG) form a helical membrane-spanning segment. Residues 34-43 (ASSALQTPTN) are Cytoplasmic-facing. Residues 44-67 (YFLVSLATADVAVGLFAIPFAITI) traverse the membrane as a helical segment. The Extracellular segment spans residues 68 to 78 (SLGFCTDFHGC). An intrachain disulfide couples Cys-78 to Cys-171. A helical membrane pass occupies residues 79–101 (LFLACFVLVLTQSSIFSLLAVAV). Residues 102–121 (DRYLAIRVPLRYKGLVTGTR) are Cytoplasmic-facing. A helical transmembrane segment spans residues 122 to 144 (ARGIIAVLWVLAFGIGLTPFLGW). Topologically, residues 145 to 178 (NSKDSATSNCTELGDGIANKSCCPVTCLFENVVP) are extracellular. N-linked (GlcNAc...) asparagine glycosylation is found at Asn-153 and Asn-163. Glu-174 is an adenosine binding site. A helical membrane pass occupies residues 179 to 203 (MSYMVYFNFFGCVLPPLLIMLVIYI). The Cytoplasmic segment spans residues 204-235 (KIFMVACKQLQRMELMDHSRTTLQREIHAAKS). Residues 236-259 (LAMIVGIFALCWLPVHAINCITLF) form a helical membrane-spanning segment. Asn-254 provides a ligand contact to adenosine. Residues 260-267 (HPALAKDK) are Extracellular-facing. The chain crosses the membrane as a helical span at residues 268-291 (PKWVMNVAILLSHANSVVNPIVYA). Residues Ser-279 and His-280 each coordinate adenosine. Residues 292-332 (YRNRDFRYSFHKIISRYVLCQAETKGGSGQAGAQSTLSLGL) lie on the Cytoplasmic side of the membrane. Cys-311 carries S-palmitoyl cysteine lipidation.

It belongs to the G-protein coupled receptor 1 family.

The protein localises to the cell membrane. Its function is as follows. Receptor for adenosine. The activity of this receptor is mediated by G proteins which activate adenylyl cyclase. The polypeptide is Adenosine receptor A2b (Adora2b) (Mus musculus (Mouse)).